Here is a 1380-residue protein sequence, read N- to C-terminus: DNA-directed RNA polymerase subunit beta (1380 aa).

Belongs to the RNA polymerase beta chain family. As to quaternary structure, the RNAP catalytic core consists of 2 alpha, 1 beta, 1 beta' and 1 omega subunit. When a sigma factor is associated with the core the holoenzyme is formed, which can initiate transcription.

It catalyses the reaction RNA(n) + a ribonucleoside 5'-triphosphate = RNA(n+1) + diphosphate. DNA-dependent RNA polymerase catalyzes the transcription of DNA into RNA using the four ribonucleoside triphosphates as substrates. The sequence is that of DNA-directed RNA polymerase subunit beta from Sinorhizobium medicae (strain WSM419) (Ensifer medicae).